A 412-amino-acid chain; its full sequence is Cinnamoyl-CoA:phenyllactate CoA-transferase (412 aa).

Residue Asn-102 participates in CoA binding. Asp-176 functions as the Nucleophile in the catalytic mechanism.

As to quaternary structure, homodimer. Part of the heterotrimeric phenyllactate dehydratase complex FldABC, composed of (R)-phenyllactate CoA-transferase (FldA) and a heterodimeric (R)-phenyllactyl-CoA dehydratase (FldB and FldC).

The enzyme catalyses (E)-cinnamoyl-CoA + (R)-3-phenyllactate = (R)-3-phenyllactoyl-CoA + (E)-cinnamate. It participates in amino-acid degradation; L-phenylalanine degradation. Component of the phenyllactate dehydratase complex FldABC that is involved in the fermentation of L-phenylalanine via a Stickland reaction. This complex catalyzes the reversible syn-dehydration of (R)-phenyllactate to (E)-cinnamate in two steps, a CoA-transfer from cinnamoyl-CoA to phenyllactate, catalyzed by FldA, followed by the dehydration of phenyllactyl-CoA to cinnamoyl-CoA, catalyzed by FldB and FldC. In vitro, FldA can use 3-phenylpropanoate as a better CoA-acceptor than phenyllactate. This is Cinnamoyl-CoA:phenyllactate CoA-transferase from Clostridium sporogenes.